The primary structure comprises 156 residues: SPbeta prophage-derived uncharacterized protein YosH (156 aa).

This Bacillus subtilis (strain 168) protein is SPbeta prophage-derived uncharacterized protein YosH (yosH).